The sequence spans 362 residues: Caspase activity and apoptosis inhibitor 1 (362 aa).

The span at 1–14 (MTGKKSSREKRRKR) shows a compositional bias: basic residues. Disordered stretches follow at residues 1-44 (MTGK…SGCG) and 65-101 (TGGG…GSLQ). Low complexity predominate over residues 19-32 (AAAALAAPDLVPAV). 2 stretches are compositionally biased toward gly residues: residues 33–44 (GGSGSGSTSGCG) and 65–74 (TGGGSGGSCW). Residue serine 89 is modified to Phosphoserine. Residue threonine 90 is modified to Phosphothreonine. Lysine 105 participates in a covalent cross-link: Glycyl lysine isopeptide (Lys-Gly) (interchain with G-Cter in SUMO2). Phosphoserine occurs at positions 121 and 204. Disordered stretches follow at residues 226–251 (SCVD…GKGE), 269–291 (GPCN…EAGQ), and 309–332 (LAES…DVQP). A compositionally biased stretch (basic and acidic residues) spans 235–251 (RENKQPEGLELKQGKGE). Residues 273-282 (EEAAAPEVPE) are compositionally biased toward low complexity. The stretch at 282-312 (ENTVQSEAGQIDDLEKDIEKSVNEILGLAES) forms a coiled coil. Serine 313 is subject to Phosphoserine.

Its function is as follows. Anti-apoptotic protein that modulates a caspase-10 dependent mitochondrial caspase-3/9 feedback amplification loop. The chain is Caspase activity and apoptosis inhibitor 1 (CAAP1) from Bos taurus (Bovine).